The chain runs to 252 residues: Glucosamine-6-phosphate deaminase (252 aa).

Aspartate 64 acts as the Proton acceptor; for enolization step in catalysis. Asparagine 130 (for ring-opening step) is an active-site residue. Catalysis depends on histidine 132, which acts as the Proton acceptor; for ring-opening step. The active-site For ring-opening step is glutamate 137.

Belongs to the glucosamine/galactosamine-6-phosphate isomerase family. NagB subfamily.

It catalyses the reaction alpha-D-glucosamine 6-phosphate + H2O = beta-D-fructose 6-phosphate + NH4(+). Its pathway is amino-sugar metabolism; N-acetylneuraminate degradation; D-fructose 6-phosphate from N-acetylneuraminate: step 5/5. Catalyzes the reversible isomerization-deamination of glucosamine 6-phosphate (GlcN6P) to form fructose 6-phosphate (Fru6P) and ammonium ion. The polypeptide is Glucosamine-6-phosphate deaminase (Exiguobacterium sibiricum (strain DSM 17290 / CCUG 55495 / CIP 109462 / JCM 13490 / 255-15)).